The sequence spans 223 residues: Ribosomal RNA small subunit methyltransferase G (223 aa).

3 residues coordinate S-adenosyl-L-methionine: G85, F90, and R154.

Belongs to the methyltransferase superfamily. RNA methyltransferase RsmG family.

It is found in the cytoplasm. The enzyme catalyses guanosine(527) in 16S rRNA + S-adenosyl-L-methionine = N(7)-methylguanosine(527) in 16S rRNA + S-adenosyl-L-homocysteine. Functionally, specifically methylates the N7 position of guanine in position 527 of 16S rRNA. This is Ribosomal RNA small subunit methyltransferase G from Rhodopseudomonas palustris (strain ATCC BAA-98 / CGA009).